The primary structure comprises 172 residues: Shikimate kinase (172 aa).

14-19 (GAGKST) contributes to the ATP binding site. Ser18 contributes to the Mg(2+) binding site. Residues Asp36, Arg60, and Gly82 each coordinate substrate. Arg120 is an ATP binding site. A substrate-binding site is contributed by Arg140. Gln157 provides a ligand contact to ATP.

This sequence belongs to the shikimate kinase family. In terms of assembly, monomer. It depends on Mg(2+) as a cofactor.

It is found in the cytoplasm. It catalyses the reaction shikimate + ATP = 3-phosphoshikimate + ADP + H(+). The protein operates within metabolic intermediate biosynthesis; chorismate biosynthesis; chorismate from D-erythrose 4-phosphate and phosphoenolpyruvate: step 5/7. Functionally, catalyzes the specific phosphorylation of the 3-hydroxyl group of shikimic acid using ATP as a cosubstrate. The chain is Shikimate kinase from Pseudoalteromonas translucida (strain TAC 125).